The chain runs to 782 residues: General transcription and DNA repair factor IIH helicase/translocase subunit XPB (782 aa).

A compositionally biased stretch (basic and acidic residues) spans 1-11 (MGRKDKSDREK). Disordered stretches follow at residues 1–47 (MGRK…VDES) and 211–242 (TISS…SGTQ). A Nuclear localization signal motif is present at residues 6-17 (KSDREKKSKKRY). Positions 19–28 (EDEEEDEEVI) are enriched in acidic residues. Low complexity predominate over residues 211-223 (TISSKSAISKSQQ). The span at 224–242 (DNGGPSSSQPADGQRSGTQ) shows a compositional bias: polar residues. Residues 326–487 (MFGNGRARSG…DLNFLIGPKL (162 aa)) enclose the Helicase ATP-binding domain. Residue 339 to 346 (LPCGAGKS) coordinates ATP. Residues 440–443 (DEVH) carry the DEVH box motif. The Helicase C-terminal domain maps to 541 to 701 (RACQFLIRFH…LAGMEEEDLM (161 aa)).

The protein belongs to the helicase family. RAD25/XPB subfamily. In terms of assembly, component of the 7-subunit TFIIH core complex composed of XPB/ERCC3, XPD/ERCC2, GTF2H1, GTF2H2, GTF2H3, GTF2H4 and GTF2H5, which is active in NER. The core complex associates with the 3-subunit CDK-activating kinase (CAK) module composed of CCNH/cyclin H, CDK7 and MNAT1 to form the 10-subunit holoenzyme (holo-TFIIH) active in transcription. Interacts with PUF60. Interacts with ATF7IP. Interacts with Epstein-Barr virus EBNA2.

Its subcellular location is the nucleus. The enzyme catalyses Couples ATP hydrolysis with the unwinding of duplex DNA by translocating in the 3'-5' direction.. It catalyses the reaction ATP + H2O = ADP + phosphate + H(+). In terms of biological role, ATP-dependent 3'-5' DNA helicase/translocase; binds dsDNA rather than ssDNA, unzipping it in a translocase rather than classical helicase activity. Component of the general transcription and DNA repair factor IIH (TFIIH) core complex. When complexed to CDK-activating kinase (CAK), involved in RNA transcription by RNA polymerase II. The ATPase activity of XPB/ERCC3, but not its helicase activity, is required for DNA opening; it may wrap around the damaged DNA wedging it open, causing localized melting and twisting that allows XPD/ERCC2 helicase to anchor. The ATP-dependent helicase activity of XPB/ERCC3 may be required for promoter escape. Also involved in transcription-coupled nucleotide excision repair (NER) of damaged DNA. In NER, TFIIH acts by opening DNA around the lesion to allow the excision of the damaged oligonucleotide and its replacement by a new DNA fragment. The polypeptide is General transcription and DNA repair factor IIH helicase/translocase subunit XPB (ercc3) (Danio rerio (Zebrafish)).